The primary structure comprises 99 residues: UPF0235 protein Sbal_3028 (99 aa).

The protein belongs to the UPF0235 family.

The protein is UPF0235 protein Sbal_3028 of Shewanella baltica (strain OS155 / ATCC BAA-1091).